The following is a 159-amino-acid chain: Ribosomal RNA large subunit methyltransferase H (159 aa).

Residues Leu-76, Gly-108, and 127-132 (FSHMTF) contribute to the S-adenosyl-L-methionine site.

Belongs to the RNA methyltransferase RlmH family. As to quaternary structure, homodimer.

It localises to the cytoplasm. It catalyses the reaction pseudouridine(1915) in 23S rRNA + S-adenosyl-L-methionine = N(3)-methylpseudouridine(1915) in 23S rRNA + S-adenosyl-L-homocysteine + H(+). In terms of biological role, specifically methylates the pseudouridine at position 1915 (m3Psi1915) in 23S rRNA. This Halothermothrix orenii (strain H 168 / OCM 544 / DSM 9562) protein is Ribosomal RNA large subunit methyltransferase H.